Reading from the N-terminus, the 1504-residue chain is NAC-alpha domain-containing protein 1 (1504 aa).

Disordered stretches follow at residues 127-150 (KPGA…ASAW), 208-261 (DREG…HGPH), 315-356 (PSDW…SSWS), 396-436 (LPQE…STSA), 460-525 (DTSA…TNSQ), 539-565 (GLES…TPTV), 701-812 (VLPP…EEGV), 834-1064 (DLES…LPVA), 1099-1366 (PFQH…AMSK), and 1430-1467 (PSEP…GLEP). The span at 342–354 (SSESSLSADSSSS) shows a compositional bias: low complexity. The span at 398–407 (QEEEEDEEDV) shows a compositional bias: acidic residues. Composition is skewed to low complexity over residues 408 to 422 (AATA…ATPD) and 462 to 475 (SAAS…SYAG). Residues 510–525 (STPQTSEQEICLTNSQ) are compositionally biased toward polar residues. Residues 775–792 (PQESPTASSLTLQSSHPT) show a composition bias toward polar residues. The span at 930-939 (PPASNQAQQN) shows a compositional bias: low complexity. A compositionally biased stretch (polar residues) spans 958–968 (STLSTKTSEPT). Positions 989-1005 (EAHDGVKTHSPQREALR) are enriched in basic and acidic residues. Ser998 carries the post-translational modification Phosphoserine. A compositionally biased stretch (polar residues) spans 1016-1031 (SPGQGNGPKSATSQGA). Over residues 1159 to 1171 (PGPPDPCLCPPPQ) the composition is skewed to pro residues. Residues 1213–1222 (VSLSPHSTLN) show a composition bias toward polar residues. Phosphoserine is present on Ser1268. The 66-residue stretch at 1354–1419 (SRSEKKARKA…AKIEDLSQQV (66 aa)) folds into the NAC-A/B domain. Over residues 1451–1464 (EEQEEEDEEVEEAG) the composition is skewed to acidic residues.

The protein belongs to the NAC-alpha family.

It localises to the cytoplasm. Its subcellular location is the nucleus. May prevent inappropriate targeting of non-secretory polypeptides to the endoplasmic reticulum (ER). May bind to nascent polypeptide chains as they emerge from the ribosome and block their interaction with the signal recognition particle (SRP), which normally targets nascent secretory peptides to the ER. May also reduce the inherent affinity of ribosomes for protein translocation sites in the ER membrane (M sites). The sequence is that of NAC-alpha domain-containing protein 1 (Nacad) from Mus musculus (Mouse).